The primary structure comprises 340 residues: Adenosine deaminase (340 aa).

Zn(2+) contacts are provided by H15 and H17. Residues H17, D19, and G172 each contribute to the substrate site. Residue H199 coordinates Zn(2+). The Proton donor role is filled by E202. Residue D279 participates in Zn(2+) binding.

This sequence belongs to the metallo-dependent hydrolases superfamily. Adenosine and AMP deaminases family. Adenosine deaminase subfamily. The cofactor is Zn(2+).

The enzyme catalyses adenosine + H2O + H(+) = inosine + NH4(+). It catalyses the reaction 2'-deoxyadenosine + H2O + H(+) = 2'-deoxyinosine + NH4(+). Functionally, catalyzes the hydrolytic deamination of adenosine and 2-deoxyadenosine. In Streptococcus agalactiae serotype Ia (strain ATCC 27591 / A909 / CDC SS700), this protein is Adenosine deaminase.